We begin with the raw amino-acid sequence, 268 residues long: Tryptophan synthase alpha chain (268 aa).

Catalysis depends on proton acceptor residues E49 and D60.

It belongs to the TrpA family. In terms of assembly, tetramer of two alpha and two beta chains.

It catalyses the reaction (1S,2R)-1-C-(indol-3-yl)glycerol 3-phosphate + L-serine = D-glyceraldehyde 3-phosphate + L-tryptophan + H2O. The protein operates within amino-acid biosynthesis; L-tryptophan biosynthesis; L-tryptophan from chorismate: step 5/5. Functionally, the alpha subunit is responsible for the aldol cleavage of indoleglycerol phosphate to indole and glyceraldehyde 3-phosphate. In Yersinia pestis bv. Antiqua (strain Antiqua), this protein is Tryptophan synthase alpha chain.